The following is a 275-amino-acid chain: Formamidopyrimidine-DNA glycosylase (275 aa).

Pro2 functions as the Schiff-base intermediate with DNA in the catalytic mechanism. Glu3 (proton donor) is an active-site residue. Residue Lys58 is the Proton donor; for beta-elimination activity of the active site. Residues His92, Arg111, and Arg154 each coordinate DNA. The FPG-type zinc-finger motif lies at 239–273; the sequence is HVYHRQGLPCQRCGTPIERIKVAQRGTHFCPHCQV. The active-site Proton donor; for delta-elimination activity is Arg263.

This sequence belongs to the FPG family. In terms of assembly, monomer. Requires Zn(2+) as cofactor.

The enzyme catalyses Hydrolysis of DNA containing ring-opened 7-methylguanine residues, releasing 2,6-diamino-4-hydroxy-5-(N-methyl)formamidopyrimidine.. It catalyses the reaction 2'-deoxyribonucleotide-(2'-deoxyribose 5'-phosphate)-2'-deoxyribonucleotide-DNA = a 3'-end 2'-deoxyribonucleotide-(2,3-dehydro-2,3-deoxyribose 5'-phosphate)-DNA + a 5'-end 5'-phospho-2'-deoxyribonucleoside-DNA + H(+). Involved in base excision repair of DNA damaged by oxidation or by mutagenic agents. Acts as a DNA glycosylase that recognizes and removes damaged bases. Has a preference for oxidized purines, such as 7,8-dihydro-8-oxoguanine (8-oxoG). Has AP (apurinic/apyrimidinic) lyase activity and introduces nicks in the DNA strand. Cleaves the DNA backbone by beta-delta elimination to generate a single-strand break at the site of the removed base with both 3'- and 5'-phosphates. In Pediococcus pentosaceus (strain ATCC 25745 / CCUG 21536 / LMG 10740 / 183-1w), this protein is Formamidopyrimidine-DNA glycosylase.